Here is a 512-residue protein sequence, read N- to C-terminus: Matrix metalloproteinase-27 (512 aa).

The signal sequence occupies residues 1–17; that stretch reads MKSFLLLFLLFVTFSSA. The propeptide at 18-98 is activation peptide; that stretch reads LPADQKMENE…PRCGVPDVGQ (81 aa). The Cysteine switch signature appears at 89 to 96; it reads PRCGVPDV. Cysteine 91 serves as a coordination point for Zn(2+). N-linked (GlcNAc...) asparagine glycosylation is present at asparagine 110. Ca(2+) is bound by residues aspartate 121 and aspartate 155. A Zn(2+)-binding site is contributed by histidine 165. Ca(2+) contacts are provided by aspartate 173, glycine 174, and valine 178. Histidine 181 serves as a coordination point for Zn(2+). Positions 188 and 192 each coordinate Ca(2+). Histidine 194 is a binding site for Zn(2+). 2 residues coordinate Ca(2+): aspartate 196 and glutamate 199. Residue histidine 216 coordinates Zn(2+). Glutamate 217 is an active-site residue. Residues histidine 220 and histidine 226 each coordinate Zn(2+). Hemopexin repeat units lie at residues 276–325, 326–371, 373–421, and 422–465; these read PHAC…WPSL, PADL…GFPR, VKKI…FPGI, and GLRV…WFQC. Cysteine 279 and cysteine 465 are joined by a disulfide. Aspartate 286 provides a ligand contact to Ca(2+). Ca(2+)-binding residues include aspartate 377 and aspartate 426. The segment at 466–512 is required for retention in the endoplasmic reticulum; the sequence is KEPLNSSLDFHFNQEKAYSGEVETLHHQSLSLLIFGIVHLLNKICSY.

This sequence belongs to the peptidase M10A family. The cofactor is Ca(2+). Requires Zn(2+) as cofactor. Post-translationally, N-glycosylated.

The protein resides in the endoplasmic reticulum. Its function is as follows. Matrix metalloproteinases degrade protein components of the extracellular matrix such as fibronectin, laminin, gelatins and/or collagens. This chain is Matrix metalloproteinase-27 (MMP27), found in Tupaia belangeri (Common tree shrew).